We begin with the raw amino-acid sequence, 562 residues long: Putative transport protein ECA2683 (562 aa).

The next 6 helical transmembrane spans lie at 8 to 28 (LLNG…LCLG), 32 to 52 (LGPV…LLGQ), 66 to 86 (FMLF…SIFF), 93 to 113 (FMLA…LGKL), 116 to 136 (WGIG…PVLV), and 158 to 178 (HLSL…IFGA). RCK C-terminal domains are found at residues 202 to 288 (LDVD…NFRD) and 290 to 373 (KEVF…RIGF). The next 5 helical transmembrane spans lie at 383 to 403 (LLAF…TIQF), 406 to 426 (FTFG…LGFL), 447 to 467 (FGLM…INSS), 478 to 498 (SGLI…AYVL), and 537 to 557 (GTYA…VVIW).

Belongs to the AAE transporter (TC 2.A.81) family. YbjL subfamily.

Its subcellular location is the cell membrane. This chain is Putative transport protein ECA2683, found in Pectobacterium atrosepticum (strain SCRI 1043 / ATCC BAA-672) (Erwinia carotovora subsp. atroseptica).